Consider the following 124-residue polypeptide: Hydrogenase maturation factor HypA (124 aa).

Histidine 2 is a Ni(2+) binding site. Zn(2+)-binding residues include cysteine 78, cysteine 81, cysteine 97, and cysteine 100.

It belongs to the HypA/HybF family.

In terms of biological role, involved in the maturation of [NiFe] hydrogenases. Required for nickel insertion into the metal center of the hydrogenase. In Methanococcus vannielii (strain ATCC 35089 / DSM 1224 / JCM 13029 / OCM 148 / SB), this protein is Hydrogenase maturation factor HypA.